Consider the following 287-residue polypeptide: 4-diphosphocytidyl-2-C-methyl-D-erythritol kinase (287 aa).

Lysine 12 is a catalytic residue. 94–104 (PAQAGMGGGSS) contributes to the ATP binding site. Residue aspartate 136 is part of the active site.

Belongs to the GHMP kinase family. IspE subfamily.

The enzyme catalyses 4-CDP-2-C-methyl-D-erythritol + ATP = 4-CDP-2-C-methyl-D-erythritol 2-phosphate + ADP + H(+). It participates in isoprenoid biosynthesis; isopentenyl diphosphate biosynthesis via DXP pathway; isopentenyl diphosphate from 1-deoxy-D-xylulose 5-phosphate: step 3/6. Catalyzes the phosphorylation of the position 2 hydroxy group of 4-diphosphocytidyl-2C-methyl-D-erythritol. In Albidiferax ferrireducens (strain ATCC BAA-621 / DSM 15236 / T118) (Rhodoferax ferrireducens), this protein is 4-diphosphocytidyl-2-C-methyl-D-erythritol kinase.